The primary structure comprises 431 residues: Growth-regulating factor 9 (431 aa).

In terms of domain architecture, QLQ spans 24–59; it reads WMKAAQLMEFRMQALVYRYIEAGLRVPHHLVVPIWN. 2 consecutive WRC domains span residues 89-133 and 307-351; these read ETEP…LVES and DNEP…VDTT. 4 consecutive short sequence motifs (bipartite nuclear localization signal) follow at residues 94 to 104, 122 to 129, 312 to 322, and 340 to 345; these read RCRRTDGKKWR, RGRKRSRK, and RGMKKK.

This sequence belongs to the GRF family. Interacts with GIF1. As to expression, detected in the shoot apical meristem (SAM) and in young leaf primordium.

It localises to the nucleus. Functionally, transcription activator that plays a role in the regulation of cell expansion in leaf and cotyledons tissues. Component of a network formed by miR396, the GRFs and their interacting factors (GIFs) acting in the regulation of meristem function, at least partially through the control of cell proliferation. This chain is Growth-regulating factor 9 (GRF9), found in Arabidopsis thaliana (Mouse-ear cress).